Reading from the N-terminus, the 345-residue chain is Meiotic recombination protein rec12 (345 aa).

A Topo IIA-type catalytic domain is found at 5-137 (DKKKVVRSWI…LNVEASAKGL (133 aa)). Tyrosine 98 serves as the catalytic O-(5'-phospho-DNA)-tyrosine intermediate. Residues glutamate 179 and aspartate 229 each coordinate Mg(2+).

It belongs to the TOP6A family. Component of the DSB catalytic core (DSBC) complex, composed of at least rec12, rec6 and rec14. The complex interacts with mde2. Requires Mg(2+) as cofactor.

Its subcellular location is the cytoplasm. It localises to the nucleus. The catalysed reaction is ATP-dependent breakage, passage and rejoining of double-stranded DNA.. In terms of biological role, required for formation of the double-strand breaks (DSBs) that initiate meiotic recombination. Required for crossover recombination and chiasmatic segregation of chromosomes during meiosis I. Also involved in the faithful equational segregation of chromosomes during meiosis II. The sequence is that of Meiotic recombination protein rec12 from Schizosaccharomyces pombe (strain 972 / ATCC 24843) (Fission yeast).